We begin with the raw amino-acid sequence, 335 residues long: Eukaryotic translation initiation factor 3 subunit I (335 aa).

WD repeat units lie at residues 8–47 (GHER…RLGT), 50–91 (GHQG…KVWD), 145–184 (CTES…QLEN), 189–228 (EFDN…ILKT), and 286–325 (GHFG…FDFM).

It belongs to the eIF-3 subunit I family. As to quaternary structure, component of the eukaryotic translation initiation factor 3 (eIF-3) complex.

The protein resides in the cytoplasm. Its function is as follows. Component of the eukaryotic translation initiation factor 3 (eIF-3) complex, which is involved in protein synthesis of a specialized repertoire of mRNAs and, together with other initiation factors, stimulates binding of mRNA and methionyl-tRNAi to the 40S ribosome. The eIF-3 complex specifically targets and initiates translation of a subset of mRNAs involved in cell proliferation. The sequence is that of Eukaryotic translation initiation factor 3 subunit I (tif34) from Aspergillus oryzae (strain ATCC 42149 / RIB 40) (Yellow koji mold).